The chain runs to 456 residues: Bifunctional protein GlmU (456 aa).

Residues 1–229 are pyrophosphorylase; sequence MLNSAMSVVI…ISETDGVNNR (229 aa). Residues 11-14, Lys-25, Gln-76, 81-82, 103-105, Gly-140, Glu-154, Asn-169, and Asn-227 each bind UDP-N-acetyl-alpha-D-glucosamine; these read LAAG, GT, and YGD. Asp-105 is a binding site for Mg(2+). A Mg(2+)-binding site is contributed by Asn-227. The tract at residues 230–250 is linker; it reads LQLSRLERIYQAEQAEKLLLS. Positions 251-456 are N-acetyltransferase; it reads GVMLRDPARF…QGWQRPVKKK (206 aa). Residues Arg-333 and Lys-351 each contribute to the UDP-N-acetyl-alpha-D-glucosamine site. His-363 acts as the Proton acceptor in catalysis. Residues Tyr-366 and Asn-377 each contribute to the UDP-N-acetyl-alpha-D-glucosamine site. Residues Ala-380, 386–387, Ser-405, Ala-423, and Arg-440 contribute to the acetyl-CoA site; that span reads NY.

In the N-terminal section; belongs to the N-acetylglucosamine-1-phosphate uridyltransferase family. This sequence in the C-terminal section; belongs to the transferase hexapeptide repeat family. As to quaternary structure, homotrimer. Mg(2+) serves as cofactor.

Its subcellular location is the cytoplasm. The enzyme catalyses alpha-D-glucosamine 1-phosphate + acetyl-CoA = N-acetyl-alpha-D-glucosamine 1-phosphate + CoA + H(+). The catalysed reaction is N-acetyl-alpha-D-glucosamine 1-phosphate + UTP + H(+) = UDP-N-acetyl-alpha-D-glucosamine + diphosphate. It participates in nucleotide-sugar biosynthesis; UDP-N-acetyl-alpha-D-glucosamine biosynthesis; N-acetyl-alpha-D-glucosamine 1-phosphate from alpha-D-glucosamine 6-phosphate (route II): step 2/2. The protein operates within nucleotide-sugar biosynthesis; UDP-N-acetyl-alpha-D-glucosamine biosynthesis; UDP-N-acetyl-alpha-D-glucosamine from N-acetyl-alpha-D-glucosamine 1-phosphate: step 1/1. It functions in the pathway bacterial outer membrane biogenesis; LPS lipid A biosynthesis. Catalyzes the last two sequential reactions in the de novo biosynthetic pathway for UDP-N-acetylglucosamine (UDP-GlcNAc). The C-terminal domain catalyzes the transfer of acetyl group from acetyl coenzyme A to glucosamine-1-phosphate (GlcN-1-P) to produce N-acetylglucosamine-1-phosphate (GlcNAc-1-P), which is converted into UDP-GlcNAc by the transfer of uridine 5-monophosphate (from uridine 5-triphosphate), a reaction catalyzed by the N-terminal domain. The protein is Bifunctional protein GlmU of Salmonella paratyphi A (strain ATCC 9150 / SARB42).